The sequence spans 388 residues: Succinate--CoA ligase [ADP-forming] subunit beta (388 aa).

The ATP-grasp domain maps to 9–244 (KQLFARYGLP…QSQEDPREAQ (236 aa)). ATP contacts are provided by residues Lys46, 53-55 (GRG), Glu99, Thr102, and Glu107. Positions 199 and 213 each coordinate Mg(2+). Residues Asn264 and 321–323 (GIV) contribute to the substrate site.

This sequence belongs to the succinate/malate CoA ligase beta subunit family. As to quaternary structure, heterotetramer of two alpha and two beta subunits. Mg(2+) is required as a cofactor.

It carries out the reaction succinate + ATP + CoA = succinyl-CoA + ADP + phosphate. The catalysed reaction is GTP + succinate + CoA = succinyl-CoA + GDP + phosphate. It functions in the pathway carbohydrate metabolism; tricarboxylic acid cycle; succinate from succinyl-CoA (ligase route): step 1/1. Its function is as follows. Succinyl-CoA synthetase functions in the citric acid cycle (TCA), coupling the hydrolysis of succinyl-CoA to the synthesis of either ATP or GTP and thus represents the only step of substrate-level phosphorylation in the TCA. The beta subunit provides nucleotide specificity of the enzyme and binds the substrate succinate, while the binding sites for coenzyme A and phosphate are found in the alpha subunit. This is Succinate--CoA ligase [ADP-forming] subunit beta from Escherichia coli O8 (strain IAI1).